Here is an 89-residue protein sequence, read N- to C-terminus: UPF0223 protein BcerKBAB4_3787 (89 aa).

The protein belongs to the UPF0223 family.

The protein is UPF0223 protein BcerKBAB4_3787 of Bacillus mycoides (strain KBAB4) (Bacillus weihenstephanensis).